We begin with the raw amino-acid sequence, 424 residues long: Serine hydroxymethyltransferase 2 (424 aa).

Residues Leu125 and 129 to 131 (GHL) contribute to the (6S)-5,6,7,8-tetrahydrofolate site. The residue at position 234 (Lys234) is an N6-(pyridoxal phosphate)lysine. Residue Glu250 coordinates (6S)-5,6,7,8-tetrahydrofolate.

Belongs to the SHMT family. Homodimer. The cofactor is pyridoxal 5'-phosphate.

It is found in the cytoplasm. The enzyme catalyses (6R)-5,10-methylene-5,6,7,8-tetrahydrofolate + glycine + H2O = (6S)-5,6,7,8-tetrahydrofolate + L-serine. Its pathway is one-carbon metabolism; tetrahydrofolate interconversion. The protein operates within amino-acid biosynthesis; glycine biosynthesis; glycine from L-serine: step 1/1. In terms of biological role, catalyzes the reversible interconversion of serine and glycine with tetrahydrofolate (THF) serving as the one-carbon carrier. This reaction serves as the major source of one-carbon groups required for the biosynthesis of purines, thymidylate, methionine, and other important biomolecules. Also exhibits THF-independent aldolase activity toward beta-hydroxyamino acids, producing glycine and aldehydes, via a retro-aldol mechanism. The sequence is that of Serine hydroxymethyltransferase 2 from Ralstonia nicotianae (strain ATCC BAA-1114 / GMI1000) (Ralstonia solanacearum).